The chain runs to 221 residues: Transcriptional regulator GfcR (221 aa).

Residues 35–59 (ASWLVERSQPTDNSQSSSANNPTEA) are disordered. Residues 42–57 (SQPTDNSQSSSANNPT) show a composition bias toward polar residues.

Belongs to the purine/pyrimidine phosphoribosyltransferase family. GfcR subfamily.

Functionally, DNA-binding transcriptional regulator that functions as a regulator of central sugar catabolic pathways. The sequence is that of Transcriptional regulator GfcR from Haloquadratum walsbyi (strain DSM 16790 / HBSQ001).